The chain runs to 61 residues: Large ribosomal subunit protein bL32c (61 aa).

The interval 37–61 is disordered; that stretch reads SRSFSSGNEHPKPKGFSGQQQQTNK.

Belongs to the bacterial ribosomal protein bL32 family.

The protein localises to the plastid. It localises to the chloroplast. The sequence is that of Large ribosomal subunit protein bL32c from Agrostis stolonifera (Creeping bentgrass).